The sequence spans 91 residues: MIDKQQVISDNAAGANDTGSTAVQVALLTARINNLAGHLQTNKKDKAGQRGLQLMNGQRRRLLKYLERTDYDAYIALTDKLGIRRGQRIVR.

This sequence belongs to the universal ribosomal protein uS15 family. Part of the 30S ribosomal subunit. Forms a bridge to the 50S subunit in the 70S ribosome, contacting the 23S rRNA.

In terms of biological role, one of the primary rRNA binding proteins, it binds directly to 16S rRNA where it helps nucleate assembly of the platform of the 30S subunit by binding and bridging several RNA helices of the 16S rRNA. Forms an intersubunit bridge (bridge B4) with the 23S rRNA of the 50S subunit in the ribosome. In Deinococcus radiodurans (strain ATCC 13939 / DSM 20539 / JCM 16871 / CCUG 27074 / LMG 4051 / NBRC 15346 / NCIMB 9279 / VKM B-1422 / R1), this protein is Small ribosomal subunit protein uS15.